The following is a 68-amino-acid chain: UPF0253 protein VFMJ11_0680 (68 aa).

It belongs to the UPF0253 family.

In Aliivibrio fischeri (strain MJ11) (Vibrio fischeri), this protein is UPF0253 protein VFMJ11_0680.